Reading from the N-terminus, the 217-residue chain is Ribonuclease HII (217 aa).

The RNase H type-2 domain occupies 27-216; sequence RTIAGIDEAG…VREHLGESRC (190 aa). A divalent metal cation contacts are provided by D33, E34, and D125.

It belongs to the RNase HII family. The cofactor is Mn(2+). Requires Mg(2+) as cofactor.

It is found in the cytoplasm. It catalyses the reaction Endonucleolytic cleavage to 5'-phosphomonoester.. Endonuclease that specifically degrades the RNA of RNA-DNA hybrids. The sequence is that of Ribonuclease HII from Geobacter sulfurreducens (strain ATCC 51573 / DSM 12127 / PCA).